Here is a 122-residue protein sequence, read N- to C-terminus: Large ribosomal subunit protein uL14 (122 aa).

This sequence belongs to the universal ribosomal protein uL14 family. As to quaternary structure, part of the 50S ribosomal subunit. Forms a cluster with proteins L3 and L19. In the 70S ribosome, L14 and L19 interact and together make contacts with the 16S rRNA in bridges B5 and B8.

Binds to 23S rRNA. Forms part of two intersubunit bridges in the 70S ribosome. This chain is Large ribosomal subunit protein uL14, found in Corynebacterium glutamicum (strain R).